A 1342-amino-acid chain; its full sequence is Subtilisin-like protease 2 (1342 aa).

A signal peptide spans 1 to 18; it reads MLNIIYVVSLILIKFIFY. A propeptide spans 19-687 (inhibition peptide); that stretch reads KECNNNNNYY…KLYNNKYSFL (669 aa). Disordered regions lie at residues 85–111 and 143–171; these read EKKT…ENEI and ADVS…NYKN. Asn-165, Asn-343, Asn-451, Asn-455, and Asn-493 each carry an N-linked (GlcNAc...) asparagine glycan. The segment at 415-474 is disordered; the sequence is KKSKKEKENTQQKGGNNPNVDINILNNNNNNNNNNNNNSNNNSNSMNDEEINYNNNNNKE. Residues 430–474 show a composition bias toward low complexity; that stretch reads NNPNVDINILNNNNNNNNNNNNNSNNNSNSMNDEEINYNNNNNKE. The disordered stretch occupies residues 500–531; the sequence is IYHNKNDNSYKNKKEGTGKNNDNNDPNNNNNK. Residues 503–516 show a composition bias toward basic and acidic residues; sequence NKNDNSYKNKKEGT. A compositionally biased stretch (low complexity) spans 518–531; that stretch reads KNNDNNDPNNNNNK. 3 N-linked (GlcNAc...) asparagine glycosylation sites follow: Asn-551, Asn-642, and Asn-729. The Extracellular segment spans residues 688–1137; that stretch reads NKFLNIEPLI…LYNLYEYDSH (450 aa). The 294-residue stretch at 727–1020 folds into the Peptidase S8 domain; sequence TWNLSIIRVF…DSLVNAEGAV (294 aa). Catalysis depends on charge relay system residues Asp-755 and His-798. Asn-821, Asn-857, Asn-893, and Asn-951 each carry an N-linked (GlcNAc...) asparagine glycan. Ser-961 (charge relay system) is an active-site residue. Asn-1010 and Asn-1106 each carry an N-linked (GlcNAc...) asparagine glycan. The helical transmembrane segment at 1138–1158 threads the bilayer; that stretch reads YLLASVILFFLALLSIFVGMI. At 1159 to 1342 the chain is on the cytoplasmic side; that stretch reads YMKSRKHSDK…MNQLDDMFMK (184 aa).

It belongs to the peptidase S8 family. In terms of processing, proteolytically cleaved at the N-terminus to generate a 74kDa intermediate which is further processed into a 72kDa form. The first maturation cleavage is autocatalytic, occurs in the ER and is necessary for the subsequent SUB2 trafficking to the microneme. The second cleavage may be mediated by PMX/plasmepsin X.

It is found in the cell membrane. Its subcellular location is the cytoplasmic vesicle. The protein localises to the secretory vesicle. The protein resides in the microneme membrane. The catalysed reaction is Hydrolysis of proteins with broad specificity for peptide bonds, and a preference for a large uncharged residue in P1. Hydrolyzes peptide amides.. Activation may be calcium-dependent. Inhibited by the non-covalent interaction with the cleaved propeptide. Functionally, serine protease which plays an essential role in the shedding of AMA1, MSP1 and MSP7 from the surface of the invading merozoite; this step is essential for productive invasion and the release of the adhesion between the erythrocyte and the merozoite. May cleave TRAMP/PTTRAMP, thereby shedding TRAMP from the merozoite surface during erythrocyte invasion. The sequence is that of Subtilisin-like protease 2 from Plasmodium falciparum.